A 316-amino-acid chain; its full sequence is Adenine deaminase (316 aa).

His14, His16, and His194 together coordinate Zn(2+). Residue Glu197 is the Proton donor of the active site. Position 275 (Asp275) interacts with Zn(2+). A substrate-binding site is contributed by Asp276.

Belongs to the metallo-dependent hydrolases superfamily. Adenosine and AMP deaminases family. Adenine deaminase type 2 subfamily. Requires Zn(2+) as cofactor.

The catalysed reaction is adenine + H2O + H(+) = hypoxanthine + NH4(+). Functionally, catalyzes the hydrolytic deamination of adenine to hypoxanthine. Plays an important role in the purine salvage pathway and in nitrogen catabolism. The chain is Adenine deaminase from Bordetella avium (strain 197N).